A 229-amino-acid polypeptide reads, in one-letter code: tRNA pseudouridine synthase B (229 aa).

The Nucleophile role is filled by Asp42.

It belongs to the pseudouridine synthase TruB family. Type 1 subfamily.

It catalyses the reaction uridine(55) in tRNA = pseudouridine(55) in tRNA. In terms of biological role, responsible for synthesis of pseudouridine from uracil-55 in the psi GC loop of transfer RNAs. The sequence is that of tRNA pseudouridine synthase B from Ureaplasma urealyticum serovar 10 (strain ATCC 33699 / Western).